A 151-amino-acid polypeptide reads, in one-letter code: Putative esterase VNG_1336C (151 aa).

It belongs to the thioesterase PaaI family.

This chain is Putative esterase VNG_1336C, found in Halobacterium salinarum (strain ATCC 700922 / JCM 11081 / NRC-1) (Halobacterium halobium).